The primary structure comprises 455 residues: Oxysterols receptor LXR-beta (455 aa).

Polar residues predominate over residues 1 to 10 (MSTPTTNSVD). The disordered stretch occupies residues 1 to 53 (MSTPTTNSVDTPLPGNGPSTPSSSPGGKEDGPEPCPGGADPDVPSTDGADSAS). The interval 1-80 (MSTPTTNSVD…GPAPKMLGDE (80 aa)) is transactivation AF-1; required for ligand-independent transactivation function. The span at 14–26 (PGNGPSTPSSSPG) shows a compositional bias: low complexity. Positions 79-156 (DELCQVCGDT…AGMREQCVLS (78 aa)) form a DNA-binding region, nuclear receptor. NR C4-type zinc fingers lie at residues 82 to 102 (CQVC…CEGC) and 120 to 144 (CRGG…LRKC). Residues 164–210 (KIRKQQQQQQQQSSPTGPGVSSSSPASGPGASPGGSDGGGQGSGEGE) are disordered. Positions 168–193 (QQQQQQQQSSPTGPGVSSSSPASGPG) are enriched in low complexity. Positions 194 to 210 (ASPGGSDGGGQGSGEGE) are enriched in gly residues. Positions 214 to 455 (LTAAQELMIQ…LLSEIWDVHE (242 aa)) are transactivation AF-2; required for ligand-dependent transactivation function; mediates interaction with CCAR2. Positions 217–455 (AQELMIQQLV…LLSEIWDVHE (239 aa)) constitute an NR LBD domain. Glycyl lysine isopeptide (Lys-Gly) (interchain with G-Cter in SUMO2) cross-links involve residues K404 and K442.

The protein belongs to the nuclear hormone receptor family. NR1 subfamily. Forms a heterodimer with RXR. Interacts with CCAR2 (via N-terminus) in a ligand-independent manner. Interacts (when sumoylated) with GPS2; interaction with GPS2 onto hepatic acute phase protein promoters prevents N-Cor corepressor complex dissociation. Interacts with ABCA12 and ABCA1; this interaction is required for ABCA1 localization to the cell surface and is necessary for its normal activity and stability. Post-translationally, sumoylated by SUMO2 at Lys-404 and Lys-442 during the hepatic acute phase response, leading to promote interaction with GPS2 and prevent N-Cor corepressor complex dissociation.

Its subcellular location is the nucleus. Nuclear receptor that exhibits a ligand-dependent transcriptional activation activity. Binds preferentially to double-stranded oligonucleotide direct repeats having the consensus half-site sequence 5'-AGGTCA-3' and 4-nt spacing (DR-4). Regulates cholesterol uptake through MYLIP-dependent ubiquitination of LDLR, VLDLR and LRP8; DLDLR and LRP8. Interplays functionally with RORA for the regulation of genes involved in liver metabolism. Induces LPCAT3-dependent phospholipid remodeling in endoplasmic reticulum (ER) membranes of hepatocytes, driving SREBF1 processing and lipogenesis. Via LPCAT3, triggers the incorporation of arachidonate into phosphatidylcholines of ER membranes, increasing membrane dynamics and enabling triacylglycerols transfer to nascent very low-density lipoprotein (VLDL) particles. Via LPCAT3 also counteracts lipid-induced ER stress response and inflammation, likely by modulating SRC kinase membrane compartmentalization and limiting the synthesis of lipid inflammatory mediators. Plays an anti-inflammatory role during the hepatic acute phase response by acting as a corepressor: inhibits the hepatic acute phase response by preventing dissociation of the N-Cor corepressor complex. The sequence is that of Oxysterols receptor LXR-beta (NR1H2) from Bos taurus (Bovine).